A 341-amino-acid polypeptide reads, in one-letter code: MRIVIFILGILLTSCFAGNEIESGSSKIKISMLVDGVLDDKSFNSSANRALLRLEEDFPENIEKVFSSAASGVYSSYVSDLDNLKMNGSDLIWLVGYMLTDASLSVSLENPKISYGIIDPVYSDDVQIPKNLIGVVFRIEQGAFLAGYIAAKKSVSGKIGFIGGVKGDIVDAFRYGYEAGAKYADKGIEIVSEYSNSFSDVNIGRAIANKMYAKGIDIIHFAAGLAGIGVIEAAKELGDGYYVIGADQDQSHLAPRNFITSVIKNVGDALYLVTSEYLKNNNTWEGGKIIQMGLRDGVVGLSNANKFEYIKVIERKIVNEEIIVPYNHEGYEIFIKQILKL.

An N-terminal signal peptide occupies residues 1–14 (MRIVIFILGILLTS). Cysteine 15 is lipidated: N-palmitoyl cysteine. Cysteine 15 carries S-diacylglycerol cysteine lipidation.

It belongs to the BMP lipoprotein family. As to quaternary structure, monomer.

It localises to the cell inner membrane. May be part of an ABC-type nucleoside uptake system involved in the purine salvage pathway. This Borrelia garinii subsp. bavariensis (strain ATCC BAA-2496 / DSM 23469 / PBi) (Borreliella bavariensis) protein is Basic membrane protein B (bmpB).